A 300-amino-acid polypeptide reads, in one-letter code: Ornithine carbamoyltransferase (300 aa).

Carbamoyl phosphate is bound by residues 51–54, Gln78, Arg102, and 129–132; these read STRT and HPCQ. Residues Asn160, Asp217, and 221–222 each bind L-ornithine; that span reads SM. Carbamoyl phosphate-binding positions include 257 to 258 and Arg285; that span reads CL.

The protein belongs to the aspartate/ornithine carbamoyltransferase superfamily. OTCase family.

It is found in the cytoplasm. The enzyme catalyses carbamoyl phosphate + L-ornithine = L-citrulline + phosphate + H(+). The protein operates within amino-acid biosynthesis; L-arginine biosynthesis; L-arginine from L-ornithine and carbamoyl phosphate: step 1/3. Reversibly catalyzes the transfer of the carbamoyl group from carbamoyl phosphate (CP) to the N(epsilon) atom of ornithine (ORN) to produce L-citrulline. The sequence is that of Ornithine carbamoyltransferase from Halorhodospira halophila (strain DSM 244 / SL1) (Ectothiorhodospira halophila (strain DSM 244 / SL1)).